Consider the following 298-residue polypeptide: Lipoyl synthase 1 (298 aa).

The [4Fe-4S] cluster site is built by Cys-34, Cys-39, Cys-45, Cys-60, Cys-64, Cys-67, and Ser-274. The Radical SAM core domain occupies 46–263; that stretch reads FYQGTATFLM…RRLGESMGFL (218 aa).

It belongs to the radical SAM superfamily. Lipoyl synthase family. Requires [4Fe-4S] cluster as cofactor.

Its subcellular location is the cytoplasm. It catalyses the reaction [[Fe-S] cluster scaffold protein carrying a second [4Fe-4S](2+) cluster] + N(6)-octanoyl-L-lysyl-[protein] + 2 oxidized [2Fe-2S]-[ferredoxin] + 2 S-adenosyl-L-methionine + 4 H(+) = [[Fe-S] cluster scaffold protein] + N(6)-[(R)-dihydrolipoyl]-L-lysyl-[protein] + 4 Fe(3+) + 2 hydrogen sulfide + 2 5'-deoxyadenosine + 2 L-methionine + 2 reduced [2Fe-2S]-[ferredoxin]. It participates in protein modification; protein lipoylation via endogenous pathway; protein N(6)-(lipoyl)lysine from octanoyl-[acyl-carrier-protein]: step 2/2. Catalyzes the radical-mediated insertion of two sulfur atoms into the C-6 and C-8 positions of the octanoyl moiety bound to the lipoyl domains of lipoate-dependent enzymes, thereby converting the octanoylated domains into lipoylated derivatives. This is Lipoyl synthase 1 from Thermosynechococcus vestitus (strain NIES-2133 / IAM M-273 / BP-1).